An 833-amino-acid chain; its full sequence is MSNQIYSARYSGVDVYEFIHSTGSIMKRKKDDWVNATHILKAANFAKAKRTRILEKEVLKETHEKVQGGFGKYQGTWVPLNIAKQLAEKFSVYDQLKPLFDFTQTDGSASPPPAPKHHHASKVDRKKAIRSASTSAIMETKRNNKKAEENQFQSSKILGNPTAAPRKRGRPVGSTRGSRRKLGVNLQRSQSDMGFPRPAIPNSSISTTQLPSIRSTMGPQSPTLGILEEERHDSRQQQPQQNNSAQFKEIDLEDGLSSDVEPSQQLQQVFNQNTGFVPQQQSSLIQTQQTESMATSVSSSPSLPTSPGDFADSNPFEERFPGGGTSPIISMIPRYPVTSRPQTSDINDKVNKYLSKLVDYFISNEMKSNKSLPQVLLHPPPHSAPYIDAPIDPELHTAFHWACSMGNLPIAEALYEAGTSIRSTNSQGQTPLMRSSLFHNSYTRRTFPRIFQLLHETVFDIDSQSQTVIHHIVKRKSTTPSAVYYLDVVLSKIKDFSPQYRIELLLNTQDKNGDTALHIASKNGDVVFFNTLVKMGALTTISNKEGLTANEIMNQQYEQMMIQNGTNQHVNSSNTDLNIHVNTNNIETKNDVNSMVIMSPVSPSDYITYPSQIATNISRNIPNVVNSMKQMASIYNDLHEQHDNEIKSLQKTLKSISKTKIQVSLKTLEVLKESSKDENGEAQTNDDFEILSRLQEQNTKKLRKRLIRYKRLIKQKLEYRQTVLLNKLIEDETQATTNNTVEKDNNTLERLELAQELTMLQLQRKNKLSSLVKKFEDNAKIHKYRRIIREGTEMNIEEVDSSLDVILQTLIANNNKNKGAEQIITISNANSHA.

The HTH APSES-type domain maps to 5–111; it reads IYSARYSGVD…FTQTDGSASP (107 aa). Residues 36–57 constitute a DNA-binding region (H-T-H motif); sequence ATHILKAANFAKAKRTRILEKE. Disordered regions lie at residues 104 to 223 and 280 to 329; these read QTDG…QSPT and QQSS…SPII. Position 110 is a phosphoserine (Ser110). Positions 115–129 are enriched in basic residues; it reads PKHHHASKVDRKKAI. Residues 139–149 are compositionally biased toward basic and acidic residues; the sequence is ETKRNNKKAEE. Positions 201-223 are enriched in polar residues; the sequence is PNSSISTTQLPSIRSTMGPQSPT. The segment covering 280–307 has biased composition (low complexity); that stretch reads QQSSLIQTQQTESMATSVSSSPSLPTSP. A Phosphothreonine modification is found at Thr325. A phosphoserine mark is found at Ser326 and Ser330. ANK repeat units lie at residues 394–423 and 512–541; these read ELHT…SIRS and NGDT…LTTI. Ser827 carries the phosphoserine modification.

Component of the transcription complex MCB-binding factor (MBF) composed of SWI6 and MBP1. Interacts with MSA1.

It localises to the nucleus. In terms of biological role, binds to MCB elements (Mlu I cell cycle box) found in the promoter of most DNA synthesis genes. Transcriptional activation by MBF has an important role in the transition from G1 to S phase. It may have a dual role in that it behaves as an activator of transcription at the G1-S boundary and as a repressor during other stages of the cell cycle. This chain is Transcription factor MBP1 (MBP1), found in Saccharomyces cerevisiae (strain ATCC 204508 / S288c) (Baker's yeast).